The following is a 152-amino-acid chain: 3-dehydroquinate dehydratase (152 aa).

Tyr-23 (proton acceptor) is an active-site residue. The substrate site is built by Asn-74, His-80, and Asp-87. The active-site Proton donor is the His-100. Substrate-binding positions include 101–102 and Arg-111; that span reads LS.

The protein belongs to the type-II 3-dehydroquinase family. As to quaternary structure, homododecamer.

It catalyses the reaction 3-dehydroquinate = 3-dehydroshikimate + H2O. Its pathway is metabolic intermediate biosynthesis; chorismate biosynthesis; chorismate from D-erythrose 4-phosphate and phosphoenolpyruvate: step 3/7. Functionally, catalyzes a trans-dehydration via an enolate intermediate. This Clostridium botulinum (strain Langeland / NCTC 10281 / Type F) protein is 3-dehydroquinate dehydratase.